A 324-amino-acid chain; its full sequence is NADH-ubiquinone oxidoreductase chain 1 (324 aa).

8 consecutive transmembrane segments (helical) span residues 3-23, 77-97, 104-124, 150-170, 174-194, 226-246, 250-270, and 297-317; these read FILSLIGSLLLIICVLVSVAF, ISPIFSLFLSLFVWMCMPFFV, LGGLFFLCCTSLGVYTVMVAG, LALIMLSFIFLIGSYNMIYFF, IYMWFLIILFPMSLVWLTISL, LIFMAEYASILFMSMLFCVIF, DVFNLLFYVKLTFISFVFIWA, and YLLFFIGFKILLFSFLLWIFF.

It belongs to the complex I subunit 1 family.

The protein resides in the mitochondrion inner membrane. The enzyme catalyses a ubiquinone + NADH + 5 H(+)(in) = a ubiquinol + NAD(+) + 4 H(+)(out). Core subunit of the mitochondrial membrane respiratory chain NADH dehydrogenase (Complex I) that is believed to belong to the minimal assembly required for catalysis. Complex I functions in the transfer of electrons from NADH to the respiratory chain. The immediate electron acceptor for the enzyme is believed to be ubiquinone. The sequence is that of NADH-ubiquinone oxidoreductase chain 1 (mt:ND1) from Drosophila yakuba (Fruit fly).